Consider the following 235-residue polypeptide: Large ribosomal subunit protein uL1 (235 aa).

The protein belongs to the universal ribosomal protein uL1 family. As to quaternary structure, part of the 50S ribosomal subunit.

Its function is as follows. Binds directly to 23S rRNA. The L1 stalk is quite mobile in the ribosome, and is involved in E site tRNA release. Functionally, protein L1 is also a translational repressor protein, it controls the translation of the L11 operon by binding to its mRNA. In Desulfotalea psychrophila (strain LSv54 / DSM 12343), this protein is Large ribosomal subunit protein uL1.